A 612-amino-acid polypeptide reads, in one-letter code: Dihydroxy-acid dehydratase (612 aa).

Asp-81 provides a ligand contact to Mg(2+). Residue Cys-122 participates in [2Fe-2S] cluster binding. The Mg(2+) site is built by Asp-123 and Lys-124. Lys-124 is modified (N6-carboxylysine). Cys-195 serves as a coordination point for [2Fe-2S] cluster. A Mg(2+)-binding site is contributed by Glu-491. Residue Ser-517 is the Proton acceptor of the active site.

This sequence belongs to the IlvD/Edd family. As to quaternary structure, homodimer. It depends on [2Fe-2S] cluster as a cofactor. Mg(2+) is required as a cofactor.

The catalysed reaction is (2R)-2,3-dihydroxy-3-methylbutanoate = 3-methyl-2-oxobutanoate + H2O. It carries out the reaction (2R,3R)-2,3-dihydroxy-3-methylpentanoate = (S)-3-methyl-2-oxopentanoate + H2O. The protein operates within amino-acid biosynthesis; L-isoleucine biosynthesis; L-isoleucine from 2-oxobutanoate: step 3/4. It functions in the pathway amino-acid biosynthesis; L-valine biosynthesis; L-valine from pyruvate: step 3/4. Functionally, functions in the biosynthesis of branched-chain amino acids. Catalyzes the dehydration of (2R,3R)-2,3-dihydroxy-3-methylpentanoate (2,3-dihydroxy-3-methylvalerate) into 2-oxo-3-methylpentanoate (2-oxo-3-methylvalerate) and of (2R)-2,3-dihydroxy-3-methylbutanoate (2,3-dihydroxyisovalerate) into 2-oxo-3-methylbutanoate (2-oxoisovalerate), the penultimate precursor to L-isoleucine and L-valine, respectively. The protein is Dihydroxy-acid dehydratase of Rhizobium etli (strain CIAT 652).